A 65-amino-acid chain; its full sequence is uncharacterized protein (65 aa).

Catalysis depends on Cys-9, which acts as the Nucleophile. Arg-15 is an active-site residue.

It belongs to the low molecular weight phosphotyrosine protein phosphatase family.

This is an uncharacterized protein from Synechococcus sp. (strain WH8020).